The chain runs to 100 residues: Co-chaperonin GroES (100 aa).

It belongs to the GroES chaperonin family. As to quaternary structure, heptamer of 7 subunits arranged in a ring. Interacts with the chaperonin GroEL.

The protein localises to the cytoplasm. Its function is as follows. Together with the chaperonin GroEL, plays an essential role in assisting protein folding. The GroEL-GroES system forms a nano-cage that allows encapsulation of the non-native substrate proteins and provides a physical environment optimized to promote and accelerate protein folding. GroES binds to the apical surface of the GroEL ring, thereby capping the opening of the GroEL channel. The sequence is that of Co-chaperonin GroES from Mycolicibacterium smegmatis (strain ATCC 700084 / mc(2)155) (Mycobacterium smegmatis).